Consider the following 54-residue polypeptide: Large ribosomal subunit protein bL33A (54 aa).

Belongs to the bacterial ribosomal protein bL33 family.

In Mesoplasma florum (strain ATCC 33453 / NBRC 100688 / NCTC 11704 / L1) (Acholeplasma florum), this protein is Large ribosomal subunit protein bL33A.